Consider the following 1722-residue polypeptide: Lymphocyte antigen 75 (1722 aa).

The signal sequence occupies residues 1-27; that stretch reads MRTGWATPRRPAGLLMLLFWFFDLAEP. The Extracellular segment spans residues 28–1666; it reads SGRAANDPFT…VVCKVPLGPD (1639 aa). One can recognise a Ricin B-type lectin domain in the interval 33 to 156; it reads NDPFTIVHGN…ESLCDQPYHE (124 aa). Residue asparagine 135 is glycosylated (N-linked (GlcNAc...) asparagine). The Fibronectin type-II domain maps to 164–211; the sequence is SYGRPCEFPFLIDGTWHHDCILDEDHSGPWCATTLNYEYDRKWGICLK. Intrachain disulfides connect cysteine 169/cysteine 194, cysteine 183/cysteine 209, cysteine 247/cysteine 340, and cysteine 317/cysteine 332. Residues 225 to 341 form the C-type lectin 1 domain; that stretch reads QFGSCYQFNT…CEAQLPYVCR (117 aa). 2 N-linked (GlcNAc...) asparagine glycosylation sites follow: asparagine 345 and asparagine 377. 4 consecutive C-type lectin domains span residues 368–486, 493–625, 652–778, and 818–931; these read NNGF…YVCK, NDAS…ICKK, ASLS…IYLR, and IEGS…FICE. Cystine bridges form between cysteine 389/cysteine 485 and cysteine 462/cysteine 477. N-linked (GlcNAc...) asparagine glycosylation is present at asparagine 529. The cysteines at positions 597 and 614 are disulfide-linked. 2 disulfides stabilise this stretch: cysteine 840-cysteine 930 and cysteine 904-cysteine 922. N-linked (GlcNAc...) asparagine glycosylation is found at asparagine 843 and asparagine 865. At tyrosine 933 the chain carries Phosphotyrosine. Residues asparagine 934, asparagine 1076, and asparagine 1103 are each glycosylated (N-linked (GlcNAc...) asparagine). The C-type lectin 6 domain maps to 958–1091; sequence FQNKCFLKIK…ERHFVSLCQK (134 aa). Residues cysteine 1060 and cysteine 1080 are joined by a disulfide bond. The 113-residue stretch at 1110–1222 folds into the C-type lectin 7 domain; sequence YLNNLYKIIP…DNQPGAICYY (113 aa). Cysteine 1197 and cysteine 1211 form a disulfide bridge. N-linked (GlcNAc...) asparagine glycans are attached at residues asparagine 1225, asparagine 1320, and asparagine 1392. Residues 1251–1374 enclose the C-type lectin 8 domain; it reads FQNCCYNFII…VIEEAVYFHQ (124 aa). C-type lectin domains follow at residues 1401 to 1513 and 1542 to 1661; these read YEDG…ICYK and YKGH…VCKV. Residues cysteine 1488 and cysteine 1502 are joined by a disulfide bond. Asparagine 1593 and asparagine 1626 each carry an N-linked (GlcNAc...) asparagine glycan. An intrachain disulfide couples cysteine 1635 to cysteine 1650. A helical transmembrane segment spans residues 1667–1691; it reads YTAIAIIVATLSILVLMGGLIWFLF. Topologically, residues 1692 to 1722 are cytoplasmic; that stretch reads QRHRLHLAGFSSVRYAQGVNEDEIMLPSFHD. Residues serine 1703 and serine 1719 each carry the phosphoserine modification.

Post-translationally, N-glycosylated. Expressed in spleen, thymus, colon and peripheral blood lymphocytes. Detected in myeloid and B-lymphoid cell lines. Isoform 2 and isoform 3 are expressed in malignant Hodgkin lymphoma cells called Hodgkin and Reed-Sternberg (HRS) cells.

It is found in the membrane. Functionally, acts as an endocytic receptor to direct captured antigens from the extracellular space to a specialized antigen-processing compartment. Causes reduced proliferation of B-lymphocytes. The chain is Lymphocyte antigen 75 (LY75) from Homo sapiens (Human).